We begin with the raw amino-acid sequence, 654 residues long: Dystrobrevin beta (654 aa).

An N-acetylmethionine modification is found at M1. Phosphothreonine occurs at positions 11, 69, 179, and 212. The segment at F238 to S294 adopts a ZZ-type zinc-finger fold. Residues C243, C246, C258, C261, C267, C270, H280, and H284 each coordinate Zn(2+). S394 bears the Phosphoserine mark. Positions D399–R448 are syntrophin-binding region. Phosphothreonine is present on T424. The stretch at N429–A519 forms a coiled coil. A disordered region spans residues Q520–G562. Composition is skewed to polar residues over residues A521–T530 and R542–L558.

Belongs to the dystrophin family. Dystrobrevin subfamily. As to quaternary structure, interacts with dystrophin short form DP71 and syntrophins SNTG1 and SNTG2. Binds DTNBP1. Forms a specific complex composed of DMD, SNTB2 and SNTA1 in neuron; the interaction with SNTB2 and SNTA1 is DMD independent. Interacts with UTRN and dystrophin short form DP71 in the kidney and liver. Interacts with SNTB1, SNTB2 and SNTA1 in kidney and liver. Interacts with KIF5A. Interacts with HMG20A and HMG20B. Interacts with OLFM1. Interacts with PRKAR2B and PRKAR1A. Post-translationally, phosphorylated by PKA. Phosphorylation at Thr-11 alters the interaction with KIF5A. Expressed in neurons. In the isocortex, expressed most prominently in the somata (including the nuclei) and the dendrites of the pyramidal cells. Expressed in the hippocampus CA1, CA2, and CA3 neurons, namely in the initial segments of dendrites. Expressed in the Purkinje cells, molecular layer interneurons, and granule cells of cerebellum. Expressed in axon fascicles associated with the spinal trigeminal tract and in the internal capsule in the brainstem.

Its subcellular location is the cytoplasm. The protein resides in the postsynaptic density. It is found in the cell projection. The protein localises to the dendrite. It localises to the basal cell membrane. Its subcellular location is the postsynapse. The protein resides in the nucleus. Its function is as follows. Scaffolding protein that assembles DMD and SNTA1 molecules to the basal membrane of kidney cells and liver sinusoids. May function as a repressor of the SYN1 promoter through the binding of repressor element-1 (RE-1), in turn regulates SYN1 expression and may be involved in cell proliferation regulation during the early phase of neural differentiation. May be required for proper maturation and function of a subset of inhibitory synapses. This is Dystrobrevin beta from Rattus norvegicus (Rat).